Reading from the N-terminus, the 342-residue chain is Uricase (342 aa).

Residues lysine 35 and threonine 80 each act as charge relay system in the active site. Positions 80, 81, 204, 221, 269, 270, and 296 each coordinate urate. Histidine 298 functions as the Charge relay system in the catalytic mechanism. Residues 340 to 342 carry the Microbody targeting signal motif; the sequence is SHL.

It belongs to the uricase family. In terms of tissue distribution, malpighian tubules.

The protein resides in the peroxisome. The enzyme catalyses urate + O2 + H2O = 5-hydroxyisourate + H2O2. The protein operates within purine metabolism; urate degradation; (S)-allantoin from urate: step 1/3. Its activity is regulated as follows. Repressed by 20-hydroxyecdysone. Catalyzes the oxidation of uric acid to 5-hydroxyisourate, which is further processed to form (S)-allantoin. This is Uricase (Uro) from Drosophila virilis (Fruit fly).